Reading from the N-terminus, the 137-residue chain is Bet1-like protein At4g14600 (137 aa).

Over 1–113 (MASNPHRSGA…MSIIRSGNNH (113 aa)) the chain is Cytoplasmic. The t-SNARE coiled-coil homology domain occupies 43–105 (DPMHSDLDDE…KNNIRKLNMS (63 aa)). A helical; Anchor for type IV membrane protein transmembrane segment spans residues 114-134 (IMHVVLFALLVFFVLYIWSKM). At 135–137 (FKR) the chain is on the vesicular side.

It belongs to the BET1 family.

It is found in the golgi apparatus membrane. It localises to the endoplasmic reticulum membrane. In terms of biological role, required for vesicular transport from the ER to the Golgi complex. Functions as a SNARE associated with ER-derived vesicles. In Arabidopsis thaliana (Mouse-ear cress), this protein is Bet1-like protein At4g14600.